Here is a 221-residue protein sequence, read N- to C-terminus: Arginine ABC transporter permease protein ArtQ (221 aa).

The ABC transmembrane type-1 domain occupies 13-206; that stretch reads ALMTLGLAVC…AVTLISQVGI (194 aa). A run of 5 helical transmembrane segments spans residues 17–37, 49–69, 82–102, 121–141, and 186–206; these read LGLAVCSLLLGLFLSLIFAVL, VFVALLRGLPEIIVVLLVYFG, IEFGAFGCGVLALSLIFAAYA, GAALGLSKSYTFIHIVMPQVW, and TWYGIAALIYLAVTLISQVGI.

This sequence belongs to the binding-protein-dependent transport system permease family. HisMQ subfamily. In terms of assembly, the complex is composed of two ATP-binding proteins (ArtP), two transmembrane proteins (ArtM and ArtQ) and a solute-binding protein (ArtI).

It is found in the cell inner membrane. In terms of biological role, part of the ABC transporter complex ArtPIQM involved in arginine transport. Probably responsible for the translocation of the substrate across the membrane. The protein is Arginine ABC transporter permease protein ArtQ (artQ) of Haemophilus influenzae (strain ATCC 51907 / DSM 11121 / KW20 / Rd).